The primary structure comprises 540 residues: L-aspartate oxidase (540 aa).

FAD contacts are provided by residues 16 to 19 (SGAA), Lys-38, 45 to 52 (STFYAQGG), 161 to 162 (NA), and Asp-223. Succinate contacts are provided by residues His-244 and 259–260 (TE). Arg-290 serves as the catalytic Proton donor/acceptor. Glu-375 is an FAD binding site. Ser-389 serves as a coordination point for succinate. An FAD-binding site is contributed by 391 to 392 (SL).

It belongs to the FAD-dependent oxidoreductase 2 family. NadB subfamily. As to quaternary structure, monomer. Homodimer. Both the monomeric and dimeric forms of the enzyme are catalytically active. FAD serves as cofactor.

It localises to the cytoplasm. It catalyses the reaction L-aspartate + O2 = iminosuccinate + H2O2. The catalysed reaction is fumarate + L-aspartate = iminosuccinate + succinate. It functions in the pathway cofactor biosynthesis; NAD(+) biosynthesis; iminoaspartate from L-aspartate (oxidase route): step 1/1. Inhibited by the product iminoaspartate. Competitively inhibited by mesotartrate. NAD acts as a competitive inhibitor to FAD. Inhibited by iodoacetic acid, diethylpyrocarbonate and tetranitromethane. In terms of biological role, catalyzes the oxidation of L-aspartate to iminoaspartate, the first step in the de novo biosynthesis of NAD(+). Can use either oxygen or fumarate as electron acceptors, which allows the enzyme to be functional under aerobic and anaerobic conditions. In vivo, fumarate is used under anaerobic conditions, and oxygen is the predominant electron acceptor under aerobic conditions due to the lower fumarate levels. In vitro, fumarate is a more efficient electron acceptor and is kinetically superior to oxygen. In Escherichia coli (strain K12), this protein is L-aspartate oxidase.